The chain runs to 281 residues: 1-acyl-sn-glycerol-3-phosphate acyltransferase (281 aa).

The next 3 helical transmembrane spans lie at 40–60 (IFVC…IMVL), 71–91 (LGNL…GIPI), and 110–130 (ASPI…VGVA). The HXXXXD motif motif lies at 109–114 (HASPID).

It belongs to the 1-acyl-sn-glycerol-3-phosphate acyltransferase family.

The protein resides in the membrane. It carries out the reaction a 1-acyl-sn-glycero-3-phosphate + an acyl-CoA = a 1,2-diacyl-sn-glycero-3-phosphate + CoA. The protein operates within phospholipid metabolism; CDP-diacylglycerol biosynthesis; CDP-diacylglycerol from sn-glycerol 3-phosphate: step 2/3. In terms of biological role, converts lysophosphatidic acid (LPA) into phosphatidic acid by incorporating acyl moiety at the 2 position. This enzyme uses erucoyl-CoA as an acyl donor. In Limnanthes douglasii (Douglas' meadowfoam), this protein is 1-acyl-sn-glycerol-3-phosphate acyltransferase (PLSC).